A 232-amino-acid chain; its full sequence is DQGAGVTYLEPSASQIGHKESIKDTARVLGRMFDGIEYRGFGQDVVEELAKYAGVPVFNGLTNEFHPTQMLADALTMREHSDKPLNQIAFAYVGDARYNMANSLLVLAAKLGMDVRIGAPKSLWPSENIIETVQAVAKETGGRILLTENVKEAVKGVDFIHTDVWVSMGEPKEAWQERIDLLKGYRVTPELMVAAENPQVKFMHCLPAFHNRETKVGEWIYETFGLNGVEVT.

Carbamoyl phosphate is bound by residues Gln-15, Arg-39, and 66 to 69 (HPTQ). Residues Asn-99, Asp-163, and 167–168 (SM) each bind L-ornithine. Carbamoyl phosphate contacts are provided by residues 204–207 (HCLP) and Thr-232.

The protein belongs to the aspartate/ornithine carbamoyltransferase superfamily. OTCase family.

Its subcellular location is the cytoplasm. It carries out the reaction carbamoyl phosphate + L-ornithine = L-citrulline + phosphate + H(+). It participates in amino-acid biosynthesis; L-arginine biosynthesis; L-arginine from L-ornithine and carbamoyl phosphate: step 1/3. Reversibly catalyzes the transfer of the carbamoyl group from carbamoyl phosphate (CP) to the N(epsilon) atom of ornithine (ORN) to produce L-citrulline. The polypeptide is Ornithine carbamoyltransferase (argF) (Neisseria subflava).